The sequence spans 313 residues: Ribosomal protein L11 methyltransferase (313 aa).

Residues Thr-163, Gly-184, Asp-206, and Asn-249 each contribute to the S-adenosyl-L-methionine site.

This sequence belongs to the methyltransferase superfamily. PrmA family.

It is found in the cytoplasm. It carries out the reaction L-lysyl-[protein] + 3 S-adenosyl-L-methionine = N(6),N(6),N(6)-trimethyl-L-lysyl-[protein] + 3 S-adenosyl-L-homocysteine + 3 H(+). Its function is as follows. Methylates ribosomal protein L11. In Brevibacillus brevis (strain 47 / JCM 6285 / NBRC 100599), this protein is Ribosomal protein L11 methyltransferase.